The sequence spans 418 residues: Serine hydroxymethyltransferase (418 aa).

Residues leucine 121 and glycine 125–leucine 127 contribute to the (6S)-5,6,7,8-tetrahydrofolate site. Position 230 is an N6-(pyridoxal phosphate)lysine (lysine 230). Residue serine 356–phenylalanine 358 participates in (6S)-5,6,7,8-tetrahydrofolate binding.

It belongs to the SHMT family. Homodimer. It depends on pyridoxal 5'-phosphate as a cofactor.

It localises to the cytoplasm. It catalyses the reaction (6R)-5,10-methylene-5,6,7,8-tetrahydrofolate + glycine + H2O = (6S)-5,6,7,8-tetrahydrofolate + L-serine. It functions in the pathway one-carbon metabolism; tetrahydrofolate interconversion. Its pathway is amino-acid biosynthesis; glycine biosynthesis; glycine from L-serine: step 1/1. Catalyzes the reversible interconversion of serine and glycine with tetrahydrofolate (THF) serving as the one-carbon carrier. This reaction serves as the major source of one-carbon groups required for the biosynthesis of purines, thymidylate, methionine, and other important biomolecules. Also exhibits THF-independent aldolase activity toward beta-hydroxyamino acids, producing glycine and aldehydes, via a retro-aldol mechanism. In Pseudoalteromonas translucida (strain TAC 125), this protein is Serine hydroxymethyltransferase.